Reading from the N-terminus, the 730-residue chain is DNA ligase (730 aa).

The tract at residues 1–23 (MAGEQHAQPTSVPAEAREKHAQL) is disordered. Residues 44 to 48 (DAEFD), 93 to 94 (SL), and E124 each bind NAD(+). K126 functions as the N6-AMP-lysine intermediate in the catalytic mechanism. Residues R147, E184, K300, and K324 each contribute to the NAD(+) site. Zn(2+) is bound by residues C418, C421, C437, and C443. The BRCT domain occupies 638–727 (EGPRPLEGLT…PEAAAEVALP (90 aa)).

It belongs to the NAD-dependent DNA ligase family. LigA subfamily. Mg(2+) serves as cofactor. Requires Mn(2+) as cofactor.

The catalysed reaction is NAD(+) + (deoxyribonucleotide)n-3'-hydroxyl + 5'-phospho-(deoxyribonucleotide)m = (deoxyribonucleotide)n+m + AMP + beta-nicotinamide D-nucleotide.. Its function is as follows. DNA ligase that catalyzes the formation of phosphodiester linkages between 5'-phosphoryl and 3'-hydroxyl groups in double-stranded DNA using NAD as a coenzyme and as the energy source for the reaction. It is essential for DNA replication and repair of damaged DNA. The chain is DNA ligase from Streptomyces avermitilis (strain ATCC 31267 / DSM 46492 / JCM 5070 / NBRC 14893 / NCIMB 12804 / NRRL 8165 / MA-4680).